The chain runs to 289 residues: Diaminopimelate epimerase (289 aa).

Substrate contacts are provided by Asn13, Gln52, and Asn72. Cys81 serves as the catalytic Proton donor. Residues 82–83 (GN), Asn167, Asn201, and 219–220 (ER) each bind substrate. The Proton acceptor role is filled by Cys228. 229-230 (GT) is a binding site for substrate.

It belongs to the diaminopimelate epimerase family. Homodimer.

Its subcellular location is the cytoplasm. It catalyses the reaction (2S,6S)-2,6-diaminopimelate = meso-2,6-diaminopimelate. Its pathway is amino-acid biosynthesis; L-lysine biosynthesis via DAP pathway; DL-2,6-diaminopimelate from LL-2,6-diaminopimelate: step 1/1. Functionally, catalyzes the stereoinversion of LL-2,6-diaminopimelate (L,L-DAP) to meso-diaminopimelate (meso-DAP), a precursor of L-lysine and an essential component of the bacterial peptidoglycan. In Caulobacter sp. (strain K31), this protein is Diaminopimelate epimerase.